A 258-amino-acid chain; its full sequence is Phosphate import ATP-binding protein PstB (258 aa).

The ABC transporter domain occupies 5 to 247; it reads IDISGLSAFY…ERIFSNPSVQ (243 aa). 37–44 contributes to the ATP binding site; it reads GPSGCGKS.

Belongs to the ABC transporter superfamily. Phosphate importer (TC 3.A.1.7) family. As to quaternary structure, the complex is composed of two ATP-binding proteins (PstB), two transmembrane proteins (PstC and PstA) and a solute-binding protein (PstS).

It localises to the cell membrane. It carries out the reaction phosphate(out) + ATP + H2O = ADP + 2 phosphate(in) + H(+). Its function is as follows. Part of the ABC transporter complex PstSACB involved in phosphate import. Responsible for energy coupling to the transport system. This Streptomyces griseus protein is Phosphate import ATP-binding protein PstB.